The chain runs to 185 residues: MINDILKDAENRMKKSLEVLADDLAKIRTGRAHPDLLAHVTIDYYGVETPITQAANITVLDARTLGITPWEKGLSSKIEKAILTSDLGLNPTNLGDSLRVPMPALNEERRKELVKLVKSETEAGRVSIRNIRRDANGDIKELLKEKEITEDQAKKAEDDIQKITDKMIAQADALAAKKEQDLMAV.

It belongs to the RRF family.

Its subcellular location is the cytoplasm. Responsible for the release of ribosomes from messenger RNA at the termination of protein biosynthesis. May increase the efficiency of translation by recycling ribosomes from one round of translation to another. This is Ribosome-recycling factor from Francisella tularensis subsp. holarctica (strain FTNF002-00 / FTA).